The primary structure comprises 90 residues: Small ribosomal subunit protein uS15c (90 aa).

The protein belongs to the universal ribosomal protein uS15 family. Part of the 30S ribosomal subunit.

Its subcellular location is the plastid. It is found in the chloroplast. The protein is Small ribosomal subunit protein uS15c (rps15) of Platanus occidentalis (Sycamore).